A 78-amino-acid chain; its full sequence is Omega-conotoxin-like ArMKLT1-011 (78 aa).

The first 22 residues, 1-22, serve as a signal peptide directing secretion; that stretch reads MKLTCMMIVAVLFLTAWTSVTA. A propeptide spanning residues 23 to 48 is cleaved from the precursor; the sequence is VNTRGELENLFLRASHEMNSEASKLD. Cystine bridges form between C52-C69, C59-C73, and C68-C77.

This sequence belongs to the conotoxin O1 superfamily. As to expression, expressed by the venom duct.

It localises to the secreted. Its function is as follows. Omega-conotoxins act at presynaptic membranes, they bind and block voltage-gated calcium channels (Cav). The polypeptide is Omega-conotoxin-like ArMKLT1-011 (Conus arenatus (Sand-dusted cone)).